A 59-amino-acid chain; its full sequence is Large ribosomal subunit protein bL32 (59 aa).

Positions 1–59 (MAVQQNKKSPSKRGMHRSHDFLTTSPLAVEPSTGEVHLRHHISPNGYYRGKKVVKTKND) are disordered. Basic residues predominate over residues 49-59 (RGKKVVKTKND).

It belongs to the bacterial ribosomal protein bL32 family.

This is Large ribosomal subunit protein bL32 from Burkholderia mallei (strain NCTC 10247).